Reading from the N-terminus, the 580-residue chain is Nuclear body protein SP140-like protein (580 aa).

The region spanning 33–149 (SLQRLFTEDQ…IYKSFKNAIQ (117 aa)) is the HSR domain. Positions 155–293 (QESDRKEREE…RSRASRKHKD (139 aa)) are disordered. The segment covering 156 to 170 (ESDRKEREERPDIKL) has biased composition (basic and acidic residues). A Glycyl lysine isopeptide (Lys-Gly) (interchain with G-Cter in SUMO2) cross-link involves residue lysine 169. Serine 180 is modified (phosphoserine). Basic residues predominate over residues 207 to 219 (KPKRKRRKKKGHG). Polar residues predominate over residues 224–236 (GTRTQKNNQQNDN). Positions 280-290 (QKRVRSRASRK) are enriched in basic residues. Lysine 292 participates in a covalent cross-link: Glycyl lysine isopeptide (Lys-Gly) (interchain with G-Cter in SUMO2). Positions 293-374 (DETVDFQAPL…RRLMEEGSLP (82 aa)) constitute an SAND domain. A PHD-type zinc finger spans residues 403 to 449 (LDECEVCRDGGELFCCDTCSRVFHEDCHIPPVESEKTPWNCIFCRMK). The 104-residue stretch at 467-570 (QMCPEEQLKC…AEFEKDFKEV (104 aa)) folds into the Bromo domain.

This Homo sapiens (Human) protein is Nuclear body protein SP140-like protein (SP140L).